A 343-amino-acid polypeptide reads, in one-letter code: Methionine import ATP-binding protein MetN 1 (343 aa).

One can recognise an ABC transporter domain in the interval 2–241 (IKLSNITKVF…PKTPLAQKFI (240 aa)). 38-45 (GASGAGKS) is a binding site for ATP.

Belongs to the ABC transporter superfamily. Methionine importer (TC 3.A.1.24) family. In terms of assembly, the complex is composed of two ATP-binding proteins (MetN), two transmembrane proteins (MetI) and a solute-binding protein (MetQ).

It localises to the cell inner membrane. The enzyme catalyses L-methionine(out) + ATP + H2O = L-methionine(in) + ADP + phosphate + H(+). It catalyses the reaction D-methionine(out) + ATP + H2O = D-methionine(in) + ADP + phosphate + H(+). Part of the ABC transporter complex MetNIQ involved in methionine import. Responsible for energy coupling to the transport system. This Salmonella typhi protein is Methionine import ATP-binding protein MetN 1.